Here is a 618-residue protein sequence, read N- to C-terminus: Structural protein ORF618 (618 aa).

Residues 570–598 (ILEAKRQIEDRAKGLSKNLDNTVTEIMNA) are a coiled coil.

It is found in the virion. In Acidianus two-tailed virus (ATV), this protein is Structural protein ORF618.